Reading from the N-terminus, the 391-residue chain is Phosphopentomutase (391 aa).

Residue Asp-14 participates in Mn(2+) binding. Positions 61–88 are disordered; the sequence is IQGVPPDPAPTAFHGRMAERSEGKDTTT. Positions 76 to 87 are enriched in basic and acidic residues; sequence RMAERSEGKDTT. Mn(2+) is bound by residues Asp-286, His-291, Asp-327, His-328, and His-339.

This sequence belongs to the phosphopentomutase family. Mn(2+) serves as cofactor.

The protein resides in the cytoplasm. It catalyses the reaction 2-deoxy-alpha-D-ribose 1-phosphate = 2-deoxy-D-ribose 5-phosphate. The catalysed reaction is alpha-D-ribose 1-phosphate = D-ribose 5-phosphate. Its pathway is carbohydrate degradation; 2-deoxy-D-ribose 1-phosphate degradation; D-glyceraldehyde 3-phosphate and acetaldehyde from 2-deoxy-alpha-D-ribose 1-phosphate: step 1/2. Isomerase that catalyzes the conversion of deoxy-ribose 1-phosphate (dRib-1-P) and ribose 1-phosphate (Rib-1-P) to deoxy-ribose 5-phosphate (dRib-5-P) and ribose 5-phosphate (Rib-5-P), respectively. The polypeptide is Phosphopentomutase (Anaeromyxobacter dehalogenans (strain 2CP-C)).